Consider the following 271-residue polypeptide: Sedoheptulose 1,7-bisphosphatase (271 aa).

Arg-12 is a binding site for substrate. His-13 (tele-phosphohistidine intermediate) is an active-site residue. Substrate-binding positions include 24–25 (YT), Arg-69, 99–102 (EWEY), Arg-181, and His-244. Residue Glu-99 is the Proton donor/acceptor of the active site.

Belongs to the phosphoglycerate mutase family. SHB17 subfamily. As to quaternary structure, homodimer.

It localises to the cytoplasm. Its subcellular location is the nucleus. It carries out the reaction D-sedoheptulose 1,7-bisphosphate + H2O = D-sedoheptulose 7-phosphate + phosphate. Its function is as follows. Sedoheptulose 1,7-bisphosphatase involved in riboneogenesis. Dephosphorylates sedoheptulose 1,7-bisphosphate (SBP), which is converted via the non-oxidative pentose phosphate pathway to ribose-5-phosphate. Has a fructose 1,6-bisphosphatase activity in vitro, but this is probably not biologically relevant, since deletion does not affect fructose 1,6-biphosphate (FBP) levels. The polypeptide is Sedoheptulose 1,7-bisphosphatase (SHB17) (Saccharomyces cerevisiae (strain ATCC 204508 / S288c) (Baker's yeast)).